Here is an 802-residue protein sequence, read N- to C-terminus: Copper-exporting P-type ATPase (802 aa).

2 HMA domains span residues 5 to 70 and 72 to 138; these read KKTT…YGVA and ETVE…YDAS. Residues C16, C19, C83, and C86 each contribute to the Cu(+) site. 6 helical membrane-spanning segments follow: residues 161-181, 192-212, 224-244, 256-276, 411-431, and 438-458; these read LIIS…HLFN, WFQF…FYVG, MDVL…YEMV, LYFE…YLEA, YFVP…ITLV, and PALV…LGLA. D495 (4-aspartylphosphate intermediate) is an active-site residue. Residues D690 and D694 each coordinate Mg(2+). The next 2 membrane-spanning stretches (helical) occupy residues 748–767 and 771–790; these read LFWA…LGLL and VAGA…ALRL.

It belongs to the cation transport ATPase (P-type) (TC 3.A.3) family. Type IB subfamily.

Its subcellular location is the cell membrane. It carries out the reaction Cu(+)(in) + ATP + H2O = Cu(+)(out) + ADP + phosphate + H(+). In terms of biological role, involved in copper export. This is Copper-exporting P-type ATPase (copA) from Staphylococcus aureus (strain USA300 / TCH1516).